The primary structure comprises 353 residues: UDP-3-O-acylglucosamine N-acyltransferase (353 aa).

The active-site Proton acceptor is the His242.

This sequence belongs to the transferase hexapeptide repeat family. LpxD subfamily. Homotrimer.

The catalysed reaction is a UDP-3-O-[(3R)-3-hydroxyacyl]-alpha-D-glucosamine + a (3R)-hydroxyacyl-[ACP] = a UDP-2-N,3-O-bis[(3R)-3-hydroxyacyl]-alpha-D-glucosamine + holo-[ACP] + H(+). The protein operates within bacterial outer membrane biogenesis; LPS lipid A biosynthesis. Catalyzes the N-acylation of UDP-3-O-acylglucosamine using 3-hydroxyacyl-ACP as the acyl donor. Is involved in the biosynthesis of lipid A, a phosphorylated glycolipid that anchors the lipopolysaccharide to the outer membrane of the cell. This chain is UDP-3-O-acylglucosamine N-acyltransferase, found in Pseudomonas paraeruginosa (strain DSM 24068 / PA7) (Pseudomonas aeruginosa (strain PA7)).